The primary structure comprises 439 residues: Keratin, type I cytoskeletal 40 (439 aa).

The tract at residues 1 to 89 (MASDGSPSCC…CEEGSFNSNE (89 aa)) is head. Residues 89–400 (EKETMQFLND…GLLEKEDSRL (312 aa)) form the IF rod domain. Residues 90 to 124 (KETMQFLNDRLASYLERVRSLEENNAELECRIREQ) are coil 1A. Residues 125 to 135 (CEPNAPLVCPD) form a linker 1 region. Residues 136–236 (YQRYFDTIEE…HEEEVNLLRE (101 aa)) form a coil 1B region. The tract at residues 237–252 (QLGDRLSVELDTAPTV) is linker 12. The tract at residues 253 to 396 (DLNKVLDEMR…NTYRGLLEKE (144 aa)) is coil 2. Residues 397–439 (DSRLPCNPGSGAPMPNSTCEPCSNSMCEPCSAYVICTVENCCA) form a tail region.

Belongs to the intermediate filament family. In terms of assembly, heterotetramer of two type I and two type II keratins.

Functionally, may play a role in late hair differentiation. This chain is Keratin, type I cytoskeletal 40 (Krt40), found in Mus musculus (Mouse).